Consider the following 389-residue polypeptide: 1-acyl-sn-glycerol-3-phosphate acyltransferase 2 (389 aa).

A helical transmembrane segment spans residues 2–22 (VIAAAVIVPLGLLFFISGLAV). The HXXXXD motif motif lies at 91 to 96 (HRSDID). A run of 2 helical transmembrane segments spans residues 305–325 (LAVVLSWACVLTLGAIKFLHW) and 333–353 (KGITISALGLGIITLCMQILI). The segment at 357–389 (QSERSTPAKVVPAKPKDNHHPESSSQTETEKEK) is disordered. A compositionally biased stretch (basic and acidic residues) spans 370–389 (KPKDNHHPESSSQTETEKEK).

It belongs to the 1-acyl-sn-glycerol-3-phosphate acyltransferase family. In terms of assembly, interacts with GPAT9 and DGAT1. As to expression, present in roots, leaves, stems, floral buds and siliques (at protein level). Widely expressed. In contrast to LPAT1, it is not expressed at higher level in leaves.

It is found in the endoplasmic reticulum membrane. The catalysed reaction is a 1-acyl-sn-glycero-3-phosphate + an acyl-CoA = a 1,2-diacyl-sn-glycero-3-phosphate + CoA. The protein operates within phospholipid metabolism; CDP-diacylglycerol biosynthesis; CDP-diacylglycerol from sn-glycerol 3-phosphate: step 2/3. In terms of biological role, converts lysophosphatidic acid (LPA) into phosphatidic acid by incorporating acyl moiety at the 2 position. Has preference for C-18-CoA substrates compared to C-16-CoA substrates. Required for female but not male gametophyte development. In Arabidopsis thaliana (Mouse-ear cress), this protein is 1-acyl-sn-glycerol-3-phosphate acyltransferase 2 (LPAT2).